Consider the following 291-residue polypeptide: MAGLASGATTACRATPMSAATTGLPLRVRGIAKRYGDSDVLRGIDLEIAPSACVAIVGRSGCGKSTLLRVIAGLETADVGTVDSGRAPLAAQRDAVRLMFQDARLLPWKRVIDNVALGLGRAGRAQAQQALDAVGLGTRGNAWPSALSGGQRQRVALARALVHRPRLLLLDEPLGALDALTRIEMQQLIVQLWRQHGFTLVLVTHDVAEASALADRIVVLEHGKVGLDVAVPVPHPRAPGLPALASIQAQVLSRLLGTTQVPEPAAPKAQTRHGPPRGATAQDTSPLQRIL.

The 222-residue stretch at 26–247 folds into the ABC transporter domain; the sequence is LRVRGIAKRY…APGLPALASI (222 aa). An ATP-binding site is contributed by 58–65; sequence GRSGCGKS. The disordered stretch occupies residues 264–291; it reads PAAPKAQTRHGPPRGATAQDTSPLQRIL. Residues 281–291 show a composition bias toward polar residues; it reads AQDTSPLQRIL.

This sequence belongs to the ABC transporter superfamily. Aliphatic sulfonates importer (TC 3.A.1.17.2) family. The complex is composed of two ATP-binding proteins (SsuB), two transmembrane proteins (SsuC) and a solute-binding protein (SsuA).

The protein resides in the cell inner membrane. It carries out the reaction ATP + H2O + aliphatic sulfonate-[sulfonate-binding protein]Side 1 = ADP + phosphate + aliphatic sulfonateSide 2 + [sulfonate-binding protein]Side 1.. Functionally, part of the ABC transporter complex SsuABC involved in aliphatic sulfonates import. Responsible for energy coupling to the transport system. The sequence is that of Aliphatic sulfonates import ATP-binding protein SsuB 2 from Xanthomonas axonopodis pv. citri (strain 306).